Consider the following 156-residue polypeptide: Ribosomal RNA large subunit methyltransferase H (156 aa).

Residues leucine 72, glycine 104, and 123-128 contribute to the S-adenosyl-L-methionine site; that span reads LSKMTL.

It belongs to the RNA methyltransferase RlmH family. Homodimer.

It localises to the cytoplasm. The enzyme catalyses pseudouridine(1915) in 23S rRNA + S-adenosyl-L-methionine = N(3)-methylpseudouridine(1915) in 23S rRNA + S-adenosyl-L-homocysteine + H(+). In terms of biological role, specifically methylates the pseudouridine at position 1915 (m3Psi1915) in 23S rRNA. The protein is Ribosomal RNA large subunit methyltransferase H of Maridesulfovibrio salexigens (strain ATCC 14822 / DSM 2638 / NCIMB 8403 / VKM B-1763) (Desulfovibrio salexigens).